The following is a 137-amino-acid chain: MMQPKKTKFRKAHKGRIHGTASSGATLAFGQFGLKAMAPERISARQIEAARRALTRHMKRAGRVWIRVFPDVPVSKKPAEVRMGSGKGAPELWVVRVKPGRVLFEIDGVGAQTAKEALTLAAAKLPIKTRFVARIAE.

Belongs to the universal ribosomal protein uL16 family. Part of the 50S ribosomal subunit.

Binds 23S rRNA and is also seen to make contacts with the A and possibly P site tRNAs. This chain is Large ribosomal subunit protein uL16, found in Nitrobacter hamburgensis (strain DSM 10229 / NCIMB 13809 / X14).